The sequence spans 75 residues: ATP synthase subunit c (75 aa).

The next 2 membrane-spanning stretches (helical) occupy residues 13 to 33 and 54 to 74; these read LNVVGYGLAAIGPGIGLGILI and MFLGLAFVEVLALLGFVLAFI.

It belongs to the ATPase C chain family. In terms of assembly, F-type ATPases have 2 components, F(1) - the catalytic core - and F(0) - the membrane proton channel. F(1) has five subunits: alpha(3), beta(3), gamma(1), delta(1), epsilon(1). F(0) has three main subunits: a(1), b(2) and c(10-14). The alpha and beta chains form an alternating ring which encloses part of the gamma chain. F(1) is attached to F(0) by a central stalk formed by the gamma and epsilon chains, while a peripheral stalk is formed by the delta and b chains.

It is found in the cell membrane. In terms of biological role, f(1)F(0) ATP synthase produces ATP from ADP in the presence of a proton or sodium gradient. F-type ATPases consist of two structural domains, F(1) containing the extramembraneous catalytic core and F(0) containing the membrane proton channel, linked together by a central stalk and a peripheral stalk. During catalysis, ATP synthesis in the catalytic domain of F(1) is coupled via a rotary mechanism of the central stalk subunits to proton translocation. Functionally, key component of the F(0) channel; it plays a direct role in translocation across the membrane. A homomeric c-ring of between 10-14 subunits forms the central stalk rotor element with the F(1) delta and epsilon subunits. In Bifidobacterium adolescentis (strain ATCC 15703 / DSM 20083 / NCTC 11814 / E194a), this protein is ATP synthase subunit c.